The following is a 293-amino-acid chain: Ribosomal protein L11 methyltransferase (293 aa).

Residues threonine 145, glycine 166, aspartate 188, and asparagine 230 each contribute to the S-adenosyl-L-methionine site.

This sequence belongs to the methyltransferase superfamily. PrmA family.

The protein localises to the cytoplasm. The enzyme catalyses L-lysyl-[protein] + 3 S-adenosyl-L-methionine = N(6),N(6),N(6)-trimethyl-L-lysyl-[protein] + 3 S-adenosyl-L-homocysteine + 3 H(+). Methylates ribosomal protein L11. The sequence is that of Ribosomal protein L11 methyltransferase from Escherichia coli O139:H28 (strain E24377A / ETEC).